Reading from the N-terminus, the 218-residue chain is Ribose-5-phosphate isomerase A (218 aa).

Substrate-binding positions include 28 to 31 (TGST), 81 to 84 (DGAD), and 94 to 97 (KGGG). Glu-103 functions as the Proton acceptor in the catalytic mechanism. Lys-121 contacts substrate.

This sequence belongs to the ribose 5-phosphate isomerase family. As to quaternary structure, homodimer.

It carries out the reaction aldehydo-D-ribose 5-phosphate = D-ribulose 5-phosphate. The protein operates within carbohydrate degradation; pentose phosphate pathway; D-ribose 5-phosphate from D-ribulose 5-phosphate (non-oxidative stage): step 1/1. Catalyzes the reversible conversion of ribose-5-phosphate to ribulose 5-phosphate. The polypeptide is Ribose-5-phosphate isomerase A (Shewanella sediminis (strain HAW-EB3)).